Here is a 327-residue protein sequence, read N- to C-terminus: Phenylalanine--tRNA ligase alpha subunit (327 aa).

E252 serves as a coordination point for Mg(2+).

It belongs to the class-II aminoacyl-tRNA synthetase family. Phe-tRNA synthetase alpha subunit type 1 subfamily. Tetramer of two alpha and two beta subunits. Mg(2+) is required as a cofactor.

It localises to the cytoplasm. It catalyses the reaction tRNA(Phe) + L-phenylalanine + ATP = L-phenylalanyl-tRNA(Phe) + AMP + diphosphate + H(+). In Edwardsiella ictaluri (strain 93-146), this protein is Phenylalanine--tRNA ligase alpha subunit.